Here is a 351-residue protein sequence, read N- to C-terminus: Nicotinate-nucleotide--dimethylbenzimidazole phosphoribosyltransferase (351 aa).

Glutamate 317 acts as the Proton acceptor in catalysis.

This sequence belongs to the CobT family.

It carries out the reaction 5,6-dimethylbenzimidazole + nicotinate beta-D-ribonucleotide = alpha-ribazole 5'-phosphate + nicotinate + H(+). The protein operates within nucleoside biosynthesis; alpha-ribazole biosynthesis; alpha-ribazole from 5,6-dimethylbenzimidazole: step 1/2. Functionally, catalyzes the synthesis of alpha-ribazole-5'-phosphate from nicotinate mononucleotide (NAMN) and 5,6-dimethylbenzimidazole (DMB). The protein is Nicotinate-nucleotide--dimethylbenzimidazole phosphoribosyltransferase of Pseudomonas fluorescens (strain ATCC BAA-477 / NRRL B-23932 / Pf-5).